We begin with the raw amino-acid sequence, 89 residues long: Small ribosomal subunit protein uS15 (89 aa).

Belongs to the universal ribosomal protein uS15 family. Part of the 30S ribosomal subunit. Forms a bridge to the 50S subunit in the 70S ribosome, contacting the 23S rRNA.

Functionally, one of the primary rRNA binding proteins, it binds directly to 16S rRNA where it helps nucleate assembly of the platform of the 30S subunit by binding and bridging several RNA helices of the 16S rRNA. Its function is as follows. Forms an intersubunit bridge (bridge B4) with the 23S rRNA of the 50S subunit in the ribosome. This Listeria innocua serovar 6a (strain ATCC BAA-680 / CLIP 11262) protein is Small ribosomal subunit protein uS15.